We begin with the raw amino-acid sequence, 370 residues long: 3,5-dihydroxyphenylacetyl-CoA synthase (370 aa).

The active site involves Cys-158.

This sequence belongs to the thiolase-like superfamily. Chalcone/stilbene synthases family.

It carries out the reaction 4 malonyl-CoA + 4 H(+) = (3,5-dihydroxyphenyl)acetyl-CoA + 4 CO2 + 3 CoA + H2O. It functions in the pathway antibiotic biosynthesis; vancomycin biosynthesis. Involved in the biosynthesis of the nonproteinogenic amino acid monomer (S)-3,5-dihydroxyphenylglycine (Dpg) responsible of the production of vancomycin and teicoplanin antibiotics. Catalyzes the Claisen condensation of four molecules of malonyl-CoA to yield 3,5-dihydroxyphenylacetyl-CoA (DPA-CoA) and three free coenzyme A (CoA). DpgA requires the presence of the dehydratases DpgB and DpgD to facilitate the aromatization of the DPA-S-DgpA or DPA-S-CoA intermediate. This chain is 3,5-dihydroxyphenylacetyl-CoA synthase (dpgA), found in Amycolatopsis orientalis (Nocardia orientalis).